We begin with the raw amino-acid sequence, 1305 residues long: Contactin-associated protein-like 5 (1305 aa).

Residues 1 to 24 (MDSVPRLTGVFTLLLSGLWHLGSS) form the signal peptide. Residues 25–1236 (ATNYNCDDPL…PLTNAVRSDS (1212 aa)) are Extracellular-facing. One can recognise an F5/8 type C domain in the interval 30–174 (CDDPLASLLS…IGMRVEVYGC (145 aa)). Cys-30 and Cys-174 are oxidised to a cystine. 2 consecutive Laminin G-like domains span residues 180-360 (VADF…TFSC) and 367-544 (PITF…IDLC). Residues Asn-282, Asn-355, and Asn-496 are each glycosylated (N-linked (GlcNAc...) asparagine). A disulfide bond links Cys-329 and Cys-360. 4 cysteine pairs are disulfide-bonded: Cys-512-Cys-544, Cys-550-Cys-561, Cys-555-Cys-570, and Cys-572-Cys-582. The region spanning 546–583 (IKDRCLPNYCEHGGFCSQSWTTFYCNCSNTGYTGATCH) is the EGF-like 1 domain. One can recognise a Fibrinogen C-terminal domain in the interval 584–790 (NSLYEQSCEV…LRCYGDRHFW (207 aa)). Residue Asn-622 is glycosylated (N-linked (GlcNAc...) asparagine). The region spanning 791–956 (NAVSFYTEAS…KVTSGVRPGC (166 aa)) is the Laminin G-like 3 domain. 5 cysteine pairs are disulfide-bonded: Cys-929/Cys-956, Cys-960/Cys-973, Cys-967/Cys-982, Cys-984/Cys-994, and Cys-1163/Cys-1198. An EGF-like 2 domain is found at 957–995 (PGHCSTYGSICHNGGKCVEKYSGYFCDCTNSPYEGPFCK). A Laminin G-like 4 domain is found at 1000-1198 (AVFEAGTSVT…VQGTLMESSC (199 aa)). Residues 1237–1257 (AVIGGVIAVVIFIIFSIIGIM) form a helical membrane-spanning segment. Topologically, residues 1258–1305 (TRFLYQHKQSHRTNQMKEKEYPENLDSSFRNDIDLQNTVSECKREYFI) are cytoplasmic.

The protein belongs to the neurexin family.

The protein resides in the membrane. May play a role in the correct development and proper functioning of the peripheral and central nervous system and be involved in cell adhesion and intercellular communication. In Canis lupus familiaris (Dog), this protein is Contactin-associated protein-like 5 (CNTNAP5).